Reading from the N-terminus, the 117-residue chain is Small ribosomal subunit protein bS6 (117 aa).

Positions 96–117 (HAEGPSVQMQKRDERDNRRERR) are disordered. Residues 105-117 (QKRDERDNRRERR) are compositionally biased toward basic and acidic residues.

Belongs to the bacterial ribosomal protein bS6 family.

Binds together with bS18 to 16S ribosomal RNA. The sequence is that of Small ribosomal subunit protein bS6 from Ruegeria sp. (strain TM1040) (Silicibacter sp.).